We begin with the raw amino-acid sequence, 200 residues long: Dipicolinate synthase subunit B (200 aa).

Dipicolinate synthase likely consists of DpaA and DpaB, since both proteins are required for DPA synthesis.

It catalyses the reaction (S)-2,3-dihydrodipicolinate + NADP(+) = dipicolinate + NADPH + H(+). Functionally, together with DpaA, catalyzes the conversion of dihydrodipicolinate to dipicolinate (DPA), which constitutes up to 10% of the dry weight of the spore. The protein is Dipicolinate synthase subunit B (dpaB) of Bacillus subtilis (strain 168).